A 155-amino-acid polypeptide reads, in one-letter code: Leader peptidase HopD (155 aa).

This sequence belongs to the peptidase A24 family.

The sequence is that of Leader peptidase HopD (hopD) from Salmonella typhimurium (strain LT2 / SGSC1412 / ATCC 700720).